The primary structure comprises 268 residues: Bidirectional sugar transporter N3 (268 aa).

Over 1–7 (MAISHNT) the chain is Extracellular. The helical transmembrane segment at 8–28 (LAFTFGMLGNVISFLVFLAPI) threads the bilayer. In terms of domain architecture, MtN3/slv 1 spans 10-96 (FTFGMLGNVI…ILYIIYAPRD (87 aa)). Over 29-42 (STFYRIYKKKSTEG) the chain is Cytoplasmic. Residues 43-63 (FQSLPYLVALFSSMLWLYYAL) form a helical membrane-spanning segment. Residues 64–70 (LKKDAFL) are Extracellular-facing. A helical transmembrane segment spans residues 71 to 91 (LITINSFGCVVETIYIILYII). At 92–103 (YAPRDARNLTFK) the chain is on the cytoplasmic side. Residues 104–124 (LLSAMNVGSFALILIVTNYAV) traverse the membrane as a helical segment. The Extracellular segment spans residues 125–131 (HGPLRVQ). A MtN3/slv 2 domain is found at 131 to 214 (QVLGWVCVSL…QMLLYAIYRN (84 aa)). Residues 132–152 (VLGWVCVSLSVSVFAAPLSIV) form a helical membrane-spanning segment. The Cytoplasmic segment spans residues 153-165 (AQVVRTKSVEFMP). The helical transmembrane segment at 166 to 186 (FNLSFTLTLSATMWFGYGFFL) threads the bilayer. The Extracellular portion of the chain corresponds to 187–190 (KDIC). Residues 191-211 (IXLPNVLGXVLGLLQMLLYAI) form a helical membrane-spanning segment. Residues 212 to 268 (YRNGGEKAMKKEKKAPIEPPKSIVIETQLEKIEQEKKNKDDDNEEKDKSEEPIGCGV) are Cytoplasmic-facing. A coiled-coil region spans residues 234–262 (IVIETQLEKIEQEKKNKDDDNEEKDKSEE). A compositionally biased stretch (basic and acidic residues) spans 243 to 262 (IEQEKKNKDDDNEEKDKSEE). The segment at 243–268 (IEQEKKNKDDDNEEKDKSEEPIGCGV) is disordered.

It belongs to the SWEET sugar transporter family. In terms of assembly, forms homooligomers and/or heterooligomers.

Its subcellular location is the cell membrane. Its function is as follows. Mediates both low-affinity uptake and efflux of sugar across the plasma membrane. The sequence is that of Bidirectional sugar transporter N3 (N3) from Medicago truncatula (Barrel medic).